The following is a 169-amino-acid chain: ATP synthase subunit b (169 aa).

A helical transmembrane segment spans residues 13–33 (LFLFQLINFLIIVFILKKFLF).

Belongs to the ATPase B chain family. In terms of assembly, F-type ATPases have 2 components, F(1) - the catalytic core - and F(0) - the membrane proton channel. F(1) has five subunits: alpha(3), beta(3), gamma(1), delta(1), epsilon(1). F(0) has three main subunits: a(1), b(2) and c(10-14). The alpha and beta chains form an alternating ring which encloses part of the gamma chain. F(1) is attached to F(0) by a central stalk formed by the gamma and epsilon chains, while a peripheral stalk is formed by the delta and b chains.

It localises to the cell inner membrane. In terms of biological role, f(1)F(0) ATP synthase produces ATP from ADP in the presence of a proton or sodium gradient. F-type ATPases consist of two structural domains, F(1) containing the extramembraneous catalytic core and F(0) containing the membrane proton channel, linked together by a central stalk and a peripheral stalk. During catalysis, ATP synthesis in the catalytic domain of F(1) is coupled via a rotary mechanism of the central stalk subunits to proton translocation. Component of the F(0) channel, it forms part of the peripheral stalk, linking F(1) to F(0). The sequence is that of ATP synthase subunit b from Endomicrobium trichonymphae.